Consider the following 827-residue polypeptide: SH3-containing GRB2-like protein 3-interacting protein 1 (827 aa).

3 disordered regions span residues 1–115 (MMEG…ESHK), 142–205 (SIGN…GPPL), and 223–278 (IWGS…QAAT). Composition is skewed to basic and acidic residues over residues 16–32 (RKKEKDTDSTGSPDRDG) and 40–54 (PPYHSKAECAREGGK). Phosphoserine is present on residues S78, S104, S105, S107, S149, S151, S156, and S169. Phosphothreonine occurs at positions 180 and 182. The residue at position 236 (S236) is a Phosphoserine. Positions 245 to 260 (TGTPPPLPPKAVPATP) are enriched in pro residues. Phosphothreonine is present on residues T247 and T259. Phosphoserine occurs at positions 265, 287, 289, 300, 316, and 319. The span at 265 to 276 (SPLTVATGNDQA) shows a compositional bias: polar residues. Basic and acidic residues predominate over residues 314 to 333 (HFSDASPEHVTPELTPREKV). The disordered stretch occupies residues 314–523 (HFSDASPEHV…LSAATTPTVE (210 aa)). 3 positions are modified to phosphothreonine: T324, T328, and T335. A compositionally biased stretch (low complexity) spans 336–345 (PPAASDIPAD). The span at 346-369 (SPAPGPPGPPGSAGPPGPPGPRHV) shows a compositional bias: pro residues. A Phosphoserine modification is found at S371. Residues 377–392 (EVQKKVAEQTFIKDDY) show a composition bias toward basic and acidic residues. S398 is modified (phosphoserine). T409 is modified (phosphothreonine). Residues 436-455 (ASGASSPARPATPLVPCSST) show a composition bias toward low complexity. Pro residues predominate over residues 456-474 (TPPPPPPRPPSRPKLPPGK). 2 stretches are compositionally biased toward low complexity: residues 481–491 (SRPFSPPIHSS) and 498–521 (PLARAESTSSISSTNSLSAATTPT). S485 is subject to Phosphoserine. One can recognise an MHD domain in the interval 558–826 (TLPVAAAFTE…RFAAGKYLAD (269 aa)). Interaction with DPF motifs-containing proteins stretches follow at residues 560–566 (PVAAAFT), 592–594 (SFP), 666–669 (TYYN), and 812–817 (SLIKKR). The necessary and sufficient to mediate interaction with CANX stretch occupies residues 648-827 (MPNLMTHLKK…FAAGKYLADN (180 aa)).

In terms of assembly, interacts with proteins essential or regulating the formation of functional clathrin-coated pits. Interacts with CANX. Interacts with AP2A1. Interacts with EPS15. Interacts with SH3GL3. Interacts with AMPH. Interacts with ITSN1 (via SH3 domains). Interacts with and REPS1. Specifically expressed in brain (at protein level).

The protein localises to the membrane. It localises to the clathrin-coated pit. Its function is as follows. May function in clathrin-mediated endocytosis. Has both a membrane binding/tubulating activity and the ability to recruit proteins essential to the formation of functional clathrin-coated pits. Has a preference for membranes enriched in phosphatidylserine and phosphoinositides and is required for the endocytosis of the transferrin receptor. May also bind tubulin. May play a role in the regulation of energy homeostasis. This is SH3-containing GRB2-like protein 3-interacting protein 1 (Sgip1) from Rattus norvegicus (Rat).